A 331-amino-acid polypeptide reads, in one-letter code: MPHSVTLRGPSPWGFRLVGGRDFSVPLTISRVHAGSKAALAALCPGDLIQAINGESTELMTHLEAQNRIKGCRDHLTLSVSRPEGRSWPSTPEDNKAQAHRIHIDSEAQDGSPLTSRRPSATGLGPEDGRPGLGSPYGQSPRLPVPHNGSNSEATLLAQMGALHVSPPHSTDPARGLPRSRDCGVDLGSEVYRMLREPAEPAAAEPKQSGSFRYLQGMLEAGEGGERPGPGGPRNLKPTASKLGAPLSGLQGLPECTRCGHGIVGTIVKARDKLYHPECFMCSDCGLNLKQRGYFFLDERLYCESHAKARVKPPEGYDVVAVYPNAKVELV.

One can recognise a PDZ domain in the interval Met1–Glu84. Disordered stretches follow at residues Val80–Ala99, Asp105–Ser152, and Ala221–Leu243. Residues Ser112, Ser116, Ser120, and Ser135 each carry the phosphoserine modification. The 60-residue stretch at Pro254 to Pro313 folds into the LIM zinc-binding domain.

In terms of assembly, homodimer. Interacts (via C-terminus only or via combined C-terminus and LIM domain, but not LIM domain only) with PTPN13 (via the second or fourth PDZ domains). Found in a complex with PTPN13 and TRIP6. Interacts (via PDZ domain) with ACTN1 and ACTN2 (via C-terminal SDL residues). Interacts (via PDZ domain) with TRIP6 (via the second LIM domain or via the third LIM domain plus C-terminus). Interacts (via LIM domain) with GRIA1 (via C-terminus); this interaction as well as the interaction with alpha-actinin is required for their colocalization in early endosomes. Interacts with PDLIM1. Forms (via LIM domain) a heterodimer with PDLIM3. Interacts directly with SRC (via kinase domain and to a lesser extent the SH2 domain). In terms of processing, phosphorylated on tyrosine residue(s). Can be dephosphorylated by PTPN13.

It is found in the cytoplasm. Its subcellular location is the cytoskeleton. The protein localises to the cell projection. The protein resides in the dendritic spine. It localises to the early endosome membrane. It is found in the recycling endosome membrane. Its subcellular location is the nucleus. The protein localises to the perinuclear region. The protein resides in the lamellipodium. It localises to the synapse. It is found in the synaptosome. In terms of biological role, suppresses SRC activation by recognizing and binding to active SRC and facilitating PTPN13-mediated dephosphorylation of SRC 'Tyr-419' leading to its inactivation. Inactivated SRC dissociates from this protein allowing the initiation of a new SRC inactivation cycle. Involved in reorganization of the actin cytoskeleton. In nonmuscle cells, binds to ACTN1 (alpha-actinin-1), increases the affinity of ACTN1 to F-actin (filamentous actin), and promotes formation of actin stress fibers. Involved in regulation of the synaptic AMPA receptor transport in dendritic spines of hippocampal pyramidal neurons directing the receptors toward an insertion at the postsynaptic membrane. Links endosomal surface-internalized GRIA1-containing AMPA receptors to the alpha-actinin/actin cytoskeleton. Increases AMPA receptor-mediated excitatory postsynaptic currents in neurons. The chain is PDZ and LIM domain protein 4 (PDLIM4) from Bos taurus (Bovine).